We begin with the raw amino-acid sequence, 412 residues long: Citrate synthase (412 aa).

Active-site residues include histidine 305 and aspartate 364.

The protein belongs to the citrate synthase family.

It carries out the reaction oxaloacetate + acetyl-CoA + H2O = citrate + CoA + H(+). Its pathway is carbohydrate metabolism; tricarboxylic acid cycle; isocitrate from oxaloacetate: step 1/2. This Rickettsia bellii protein is Citrate synthase (gltA).